The following is a 1320-amino-acid chain: Mediator of RNA polymerase II transcription subunit 15 (1320 aa).

The segment covering 235–244 (QQASLNQLTP) has biased composition (polar residues). Disordered stretches follow at residues 235 to 283 (QQAS…KPQQ), 372 to 398 (KNMM…PQQA), 540 to 688 (QLQQ…QQQT), 702 to 791 (QTQQ…PTEQ), and 1233 to 1270 (DSSS…DSKK). Composition is skewed to low complexity over residues 245-283 (QQRA…KPQQ), 375-398 (MAQQ…PQQA), and 540-554 (QLQQ…HTQL). Residues 555–587 (ADSFSQRQFTSPTLAKPSANVSTIAQQQTQPTA) show a composition bias toward polar residues. Composition is skewed to low complexity over residues 588-624 (LSQS…QQQQ), 634-688 (QQQT…QQQT), and 702-780 (QTQQ…PQQT).

Belongs to the Mediator complex subunit 15 family. In terms of assembly, component of the Mediator complex.

The protein resides in the nucleus. Component of the Mediator complex, a coactivator involved in regulated gene transcription of nearly all RNA polymerase II-dependent genes. Mediator functions as a bridge to convey information from gene-specific regulatory proteins to the basal RNA polymerase II transcription machinery. Mediator is recruited to promoters by direct interactions with regulatory proteins and serves as a scaffold for the assembly of a functional preinitiation complex with RNA polymerase II and the general transcription factors. The chain is Mediator of RNA polymerase II transcription subunit 15 (GAL11) from Eremothecium gossypii (strain ATCC 10895 / CBS 109.51 / FGSC 9923 / NRRL Y-1056) (Yeast).